The primary structure comprises 405 residues: S-arrestin (405 aa).

The residue at position 234 (T234) is a Phosphothreonine.

It belongs to the arrestin family. Monomer. Homodimer. Homotetramer. Interacts with RHO (via the phosphorylated C-terminus). In terms of tissue distribution, detected in retina, in the proximal portion of the outer segment of rod photoreceptor cells (at protein level).

It is found in the cell projection. The protein resides in the cilium. Its subcellular location is the photoreceptor outer segment. The protein localises to the membrane. Binds to photoactivated, phosphorylated RHO and terminates RHO signaling via G-proteins by competing with G-proteins for the same binding site on RHO. May play a role in preventing light-dependent degeneration of retinal photoreceptor cells. The protein is S-arrestin (SAG) of Homo sapiens (Human).